Consider the following 376-residue polypeptide: Erythronate-4-phosphate dehydrogenase (376 aa).

Positions 45 and 67 each coordinate substrate. Asp147 is an NAD(+) binding site. Arg209 is a catalytic residue. Asp233 contacts NAD(+). Residue Glu238 is part of the active site. His255 serves as the catalytic Proton donor. Gly258 is a binding site for NAD(+). Tyr259 provides a ligand contact to substrate.

The protein belongs to the D-isomer specific 2-hydroxyacid dehydrogenase family. PdxB subfamily. As to quaternary structure, homodimer.

Its subcellular location is the cytoplasm. The catalysed reaction is 4-phospho-D-erythronate + NAD(+) = (R)-3-hydroxy-2-oxo-4-phosphooxybutanoate + NADH + H(+). It functions in the pathway cofactor biosynthesis; pyridoxine 5'-phosphate biosynthesis; pyridoxine 5'-phosphate from D-erythrose 4-phosphate: step 2/5. Its function is as follows. Catalyzes the oxidation of erythronate-4-phosphate to 3-hydroxy-2-oxo-4-phosphonooxybutanoate. The protein is Erythronate-4-phosphate dehydrogenase of Shewanella sp. (strain MR-4).